Reading from the N-terminus, the 300-residue chain is Ribosomal RNA small subunit methyltransferase H (300 aa).

Residues 46 to 48, Asp65, Phe92, Asp107, and Gln114 each bind S-adenosyl-L-methionine; that span reads GGH.

The protein belongs to the methyltransferase superfamily. RsmH family.

The protein localises to the cytoplasm. The enzyme catalyses cytidine(1402) in 16S rRNA + S-adenosyl-L-methionine = N(4)-methylcytidine(1402) in 16S rRNA + S-adenosyl-L-homocysteine + H(+). In terms of biological role, specifically methylates the N4 position of cytidine in position 1402 (C1402) of 16S rRNA. The polypeptide is Ribosomal RNA small subunit methyltransferase H (Prochlorococcus marinus (strain MIT 9312)).